A 98-amino-acid polypeptide reads, in one-letter code: Derivative of benzaldehyde biosynthesis cluster protein C (98 aa).

Belongs to the YciI family.

It functions in the pathway secondary metabolite biosynthesis. In terms of biological role, part of the gene cluster that mediates the biosynthesis of the antibiotic 2,4-dihydroxy-3-methyl-6-(2-oxopropyl)benzaldehyde (DHMBA) and its derivatives. The direct non-reducing polyketide synthase dbaI product is 2,4-dihydroxy-3-methyl-6-(2-oxopropyl)benzaldehyde (DHMBA), produced by condensation of one acetyl-CoA starter unit with 4 malonyl-CoA units and one methylation step. The FAD-dependent monooxygenase dbaH is responsible for the synthesis of yellow pigments derived from the oxidation of DHMBA. The roles of dbaB, C, E and F have still to be determined. The chain is Derivative of benzaldehyde biosynthesis cluster protein C from Emericella nidulans (strain FGSC A4 / ATCC 38163 / CBS 112.46 / NRRL 194 / M139) (Aspergillus nidulans).